A 350-amino-acid polypeptide reads, in one-letter code: tRNA pseudouridine synthase D (350 aa).

The active-site Nucleophile is aspartate 79. Positions 154–306 (GAPNYYGPQR…EQERRPIVLY (153 aa)) constitute a TRUD domain.

Belongs to the pseudouridine synthase TruD family.

It catalyses the reaction uridine(13) in tRNA = pseudouridine(13) in tRNA. Functionally, responsible for synthesis of pseudouridine from uracil-13 in transfer RNAs. The polypeptide is tRNA pseudouridine synthase D (Pseudoalteromonas atlantica (strain T6c / ATCC BAA-1087)).